A 421-amino-acid polypeptide reads, in one-letter code: NADH-quinone oxidoreductase subunit F 2 (421 aa).

53 to 62 contacts NAD(+); that stretch reads GRGGAGFPTG. Position 165-212 (165-212) interacts with FMN; that stretch reads GAGAYICGEETAMLESLEGKRAQPRLKPPFPAVAGLYASPTVINNVET. Residues C342, C345, C348, and C388 each coordinate [4Fe-4S] cluster.

It belongs to the complex I 51 kDa subunit family. Requires FMN as cofactor. [4Fe-4S] cluster serves as cofactor.

It carries out the reaction a quinone + NADH + 5 H(+)(in) = a quinol + NAD(+) + 4 H(+)(out). Its function is as follows. NDH-1 shuttles electrons from NADH, via FMN and iron-sulfur (Fe-S) centers, to quinones in the respiratory chain. The immediate electron acceptor for the enzyme in this species is believed to be ubiquinone. Couples the redox reaction to proton translocation (for every two electrons transferred, four hydrogen ions are translocated across the cytoplasmic membrane), and thus conserves the redox energy in a proton gradient. The sequence is that of NADH-quinone oxidoreductase subunit F 2 (nuoF2) from Rhizobium meliloti (strain 1021) (Ensifer meliloti).